Here is a 555-residue protein sequence, read N- to C-terminus: Urocanate hydratase (555 aa).

NAD(+) contacts are provided by residues 53 to 54 (GG), Q131, 177 to 179 (GMG), E197, R202, 243 to 244 (NA), 264 to 268 (QTSAH), 274 to 275 (YL), and Y323. The active site involves C411. Residue G493 coordinates NAD(+).

It belongs to the urocanase family. NAD(+) serves as cofactor.

Its subcellular location is the cytoplasm. It catalyses the reaction 4-imidazolone-5-propanoate = trans-urocanate + H2O. The protein operates within amino-acid degradation; L-histidine degradation into L-glutamate; N-formimidoyl-L-glutamate from L-histidine: step 2/3. Functionally, catalyzes the conversion of urocanate to 4-imidazolone-5-propionate. This Maricaulis maris (strain MCS10) (Caulobacter maris) protein is Urocanate hydratase.